The primary structure comprises 193 residues: Sporulation-specific transcriptional regulator GerR (193 aa).

Positions Met1 to Tyr61 constitute an HTH myb-type domain. The segment at residues Phe35–Val57 is a DNA-binding region (H-T-H motif). The stretch at Ala122 to Met177 forms a coiled coil.

Belongs to the RsfA transcriptional regulator family.

Functionally, transcriptional factor that regulates the expression of several late sporulation genes. Controls genes of both sigma-E and sigma-K regulons, acting alone on some genes and in conjunction with SpoIIID or GerE on others. Regulates, directly or indirectly, the expression of genes encoding coat proteins such as cgeA, cotB, cotC, cotG, cotU and cotY. Controls late sporulation genes in two ways: directly, by binding to the promoter region of genes such as cotB, cotU and spoVIF, and acting directly on their transcription, and indirectly, through the activation of SpoVIF, which stabilizes the transcriptional activator GerE and consequently induces the expression of the GerE-dependent genes, such as cotC and cotG. Its effect is strongly positive on spoVIF, cotC, and cotG, weakly positive on cotB, and negative on cotU. The sequence is that of Sporulation-specific transcriptional regulator GerR from Bacillus subtilis (strain 168).